The following is a 78-amino-acid chain: MAIHPKVKDIIVEQLGVDPDKVKAEASFIDDLGADSLDIVELVMAMEEEFDLEIPDEDAEKLKTVQDVASYLEKKGKA.

The 76-residue stretch at 1-76 (MAIHPKVKDI…DVASYLEKKG (76 aa)) folds into the Carrier domain. Ser-36 carries the post-translational modification O-(pantetheine 4'-phosphoryl)serine.

The protein belongs to the acyl carrier protein (ACP) family. 4'-phosphopantetheine is transferred from CoA to a specific serine of apo-ACP by AcpS. This modification is essential for activity because fatty acids are bound in thioester linkage to the sulfhydryl of the prosthetic group.

The protein resides in the cytoplasm. Its pathway is lipid metabolism; fatty acid biosynthesis. Carrier of the growing fatty acid chain in fatty acid biosynthesis. The protein is Acyl carrier protein of Bdellovibrio bacteriovorus (strain ATCC 15356 / DSM 50701 / NCIMB 9529 / HD100).